A 513-amino-acid polypeptide reads, in one-letter code: V-type proton ATPase subunit B, kidney isoform (513 aa).

Over residues 1–18 the composition is skewed to polar residues; that stretch reads MATTVDSRSSGFTGNSCD. The tract at residues 1-21 is disordered; that stretch reads MATTVDSRSSGFTGNSCDPGT. ATP is bound at residue arginine 394. Positions 510–513 match the PDZ-binding motif; sequence DTAL.

It belongs to the ATPase alpha/beta chains family. V-ATPase is a heteromultimeric enzyme made up of two complexes: the ATP-hydrolytic V1 complex and the proton translocation V0 complex. The V1 complex consists of three catalytic AB heterodimers that form a heterohexamer, three peripheral stalks each consisting of EG heterodimers, one central rotor including subunits D and F, and the regulatory subunits C and H. The proton translocation complex V0 consists of the proton transport subunit a, a ring of proteolipid subunits c9c'', rotary subunit d, subunits e and f, and the accessory subunits ATP6AP1/Ac45 and ATP6AP2/PRR. Forms a complex with NHERF1 and SCL4A7. As to expression, highly expressed in the kidney; found in early distal nephron, encompassing thick ascending limbs and distal convoluted tubules and in the alpha-intercalated cells of the cortical collecting ducts (at protein level). Expressed in the olfactory epithelium (at protein level). Expressed at lower levels in the testis.

It localises to the apical cell membrane. The protein resides in the basolateral cell membrane. Functionally, non-catalytic subunit of the V1 complex of vacuolar(H+)-ATPase (V-ATPase), a multisubunit enzyme composed of a peripheral complex (V1) that hydrolyzes ATP and a membrane integral complex (V0) that translocates protons. V-ATPase is responsible for acidifying and maintaining the pH of intracellular compartments and in some cell types, is targeted to the plasma membrane, where it is responsible for acidifying the extracellular environment. Essential for the proper assembly and activity of V-ATPase. In renal intercalated cells, mediates secretion of protons (H+) into the urine thereby ensuring correct urinary acidification. Required for optimal olfactory function by mediating the acidification of the nasal olfactory epithelium. The protein is V-type proton ATPase subunit B, kidney isoform (Atp6v1b1) of Mus musculus (Mouse).